The primary structure comprises 75 residues: Exodeoxyribonuclease 7 small subunit (75 aa).

Belongs to the XseB family. Heterooligomer composed of large and small subunits.

The protein resides in the cytoplasm. It catalyses the reaction Exonucleolytic cleavage in either 5'- to 3'- or 3'- to 5'-direction to yield nucleoside 5'-phosphates.. Bidirectionally degrades single-stranded DNA into large acid-insoluble oligonucleotides, which are then degraded further into small acid-soluble oligonucleotides. The polypeptide is Exodeoxyribonuclease 7 small subunit (Thermoanaerobacter sp. (strain X514)).